The primary structure comprises 590 residues: Aspartate--tRNA(Asp/Asn) ligase (590 aa).

Glutamate 176 lines the L-aspartate pocket. Residues glutamine 200–lysine 203 are aspartate. 2 residues coordinate L-aspartate: arginine 222 and histidine 451. Residue arginine 222–glutamate 224 participates in ATP binding. Glutamate 485 contacts ATP. Arginine 492 is an L-aspartate binding site. Residue glycine 537 to arginine 540 participates in ATP binding.

Belongs to the class-II aminoacyl-tRNA synthetase family. Type 1 subfamily. In terms of assembly, homodimer.

Its subcellular location is the cytoplasm. It catalyses the reaction tRNA(Asx) + L-aspartate + ATP = L-aspartyl-tRNA(Asx) + AMP + diphosphate. Aspartyl-tRNA synthetase with relaxed tRNA specificity since it is able to aspartylate not only its cognate tRNA(Asp) but also tRNA(Asn). Reaction proceeds in two steps: L-aspartate is first activated by ATP to form Asp-AMP and then transferred to the acceptor end of tRNA(Asp/Asn). The polypeptide is Aspartate--tRNA(Asp/Asn) ligase (Ehrlichia canis (strain Jake)).